The chain runs to 189 residues: Elongation factor P (189 aa).

This sequence belongs to the elongation factor P family.

It is found in the cytoplasm. The protein operates within protein biosynthesis; polypeptide chain elongation. Its function is as follows. Involved in peptide bond synthesis. Stimulates efficient translation and peptide-bond synthesis on native or reconstituted 70S ribosomes in vitro. Probably functions indirectly by altering the affinity of the ribosome for aminoacyl-tRNA, thus increasing their reactivity as acceptors for peptidyl transferase. This is Elongation factor P from Chloroflexus aurantiacus (strain ATCC 29364 / DSM 637 / Y-400-fl).